Here is a 372-residue protein sequence, read N- to C-terminus: Chaperone protein DnaJ (372 aa).

The region spanning Asp-5 to Gly-70 is the J domain. Residues Gly-127–Tyr-205 form a CR-type zinc finger. Positions 140, 143, 157, 160, 179, 182, 193, and 196 each coordinate Zn(2+). CXXCXGXG motif repeat units lie at residues Cys-140–Gly-147, Cys-157–Gly-164, Cys-179–Gly-186, and Cys-193–Gly-200.

The protein belongs to the DnaJ family. As to quaternary structure, homodimer. The cofactor is Zn(2+).

The protein resides in the cytoplasm. Participates actively in the response to hyperosmotic and heat shock by preventing the aggregation of stress-denatured proteins and by disaggregating proteins, also in an autonomous, DnaK-independent fashion. Unfolded proteins bind initially to DnaJ; upon interaction with the DnaJ-bound protein, DnaK hydrolyzes its bound ATP, resulting in the formation of a stable complex. GrpE releases ADP from DnaK; ATP binding to DnaK triggers the release of the substrate protein, thus completing the reaction cycle. Several rounds of ATP-dependent interactions between DnaJ, DnaK and GrpE are required for fully efficient folding. Also involved, together with DnaK and GrpE, in the DNA replication of plasmids through activation of initiation proteins. This Photorhabdus laumondii subsp. laumondii (strain DSM 15139 / CIP 105565 / TT01) (Photorhabdus luminescens subsp. laumondii) protein is Chaperone protein DnaJ.